Consider the following 246-residue polypeptide: UL16-binding protein 6 (246 aa).

The N-terminal stretch at Met1–Ala25 is a signal peptide. The tract at residues Asp29–Glu117 is MHC class I alpha-1 like. A disulfide bond links Cys50 and Cys66. N-linked (GlcNAc...) asparagine glycosylation is found at Asn68 and Asn82. The interval Pro118–Gly210 is MHC class I alpha-2 like. A disulfide bridge links Cys127 with Cys190. A lipid anchor (GPI-anchor amidated glycine) is attached at Gly218. Positions Thr219–Ile246 are cleaved as a propeptide — removed in mature form.

Belongs to the MHC class I family. In terms of assembly, interacts with KLRK1/NKG2D. (Microbial infection) In CMV-infected cells, interacts with the viral glycoprotein UL16; this interaction causes relocalization from the cell surface to the cytoplasm and prevents binding to and activation of KLRK1/NKG2D, providing CMV with an immune evasion mechanism. Widely expressed. Expressed in trachea. Constitutively expressed in peripheral blood mononuclear cells, including B-cells and natural killer cells, as well as CD4+ and CD8+ T-cells and monocytes. Tends to be up-regulated in various lymphoid malignancies, including chronic lymphocytic leukemia.

It is found in the cell membrane. It localises to the endoplasmic reticulum. In terms of biological role, binds and activates the KLRK1/NKG2D receptor, mediating natural killer cell cytotoxicity. This Homo sapiens (Human) protein is UL16-binding protein 6 (RAET1L).